A 257-amino-acid polypeptide reads, in one-letter code: GTP cyclohydrolase 1 type 2 homolog (257 aa).

Residues His65, Asp103, His221, and Glu224 each coordinate a divalent metal cation.

Belongs to the GTP cyclohydrolase I type 2/NIF3 family. Homohexamer.

The chain is GTP cyclohydrolase 1 type 2 homolog (ykiD) from Lactococcus lactis subsp. lactis (strain IL1403) (Streptococcus lactis).